Here is a 377-residue protein sequence, read N- to C-terminus: Ribosomal RNA large subunit methyltransferase G (377 aa).

This sequence belongs to the methyltransferase superfamily. RlmG family.

The protein resides in the cytoplasm. It carries out the reaction guanosine(1835) in 23S rRNA + S-adenosyl-L-methionine = N(2)-methylguanosine(1835) in 23S rRNA + S-adenosyl-L-homocysteine + H(+). Functionally, specifically methylates the guanine in position 1835 (m2G1835) of 23S rRNA. The protein is Ribosomal RNA large subunit methyltransferase G of Shewanella sp. (strain ANA-3).